Consider the following 228-residue polypeptide: MSGRSSRRGSFSLRQPPVVDIGCNCRRPKLFSIFSSSSSSSFRRGGSKPKSPNASSTSTTTAFTATTGGAGTATSTDSSWGPASFTTNSLFEEPAAAQQEQEQLETRRRRRQQRRRRRRAGATSFARGGDVGGHDDEQQQLQEQAPYRRVAKESVAVAVESAEPYEDFRESMVQMVVEKEIYAWDDLNDLLHQFLSLNSPRHHPLILHAFADLWTRNGLFSPPSPCQF.

3 stretches are compositionally biased toward low complexity: residues 1–14, 54–79, and 92–101; these read MSGR…FSLR, ASST…TDSS, and EEPAAAQQEQ. Disordered regions lie at residues 1–21 and 36–143; these read MSGR…VVDI and SSSS…QLQE. Residues 107 to 120 show a composition bias toward basic residues; it reads RRRRRQQRRRRRRA. The 60-residue stretch at 157-216 folds into the OVATE domain; sequence VAVESAEPYEDFRESMVQMVVEKEIYAWDDLNDLLHQFLSLNSPRHHPLILHAFADLWTR.

As to quaternary structure, interacts with GSK2. Post-translationally, phosphorylated on serine and threonine residues by GSK2. Dephosphorylated during response to brassinosteroid. As to expression, expressed in roots, stems, stem nodes, young leaves, leaf sheaths, lamina joints, young spikelets, inflorescences, stamens and ovaries, embryos and seeds.

Its subcellular location is the nucleus. The protein resides in the cytoplasm. In terms of biological role, probable transcriptional repressor that regulates multiple aspects of plant growth and development, partly through brassinosteroid (BR) signaling pathway. Acts downstream of the kinase GSK2, a negative regulator of BR signaling. This chain is Transcription repressor OFP8, found in Oryza sativa subsp. japonica (Rice).